Consider the following 502-residue polypeptide: Cytochrome P450 71B17 (502 aa).

The chain crosses the membrane as a helical span at residues 1-21; sequence MAISLLCLFLITFVSLTIVGC. Residue Cys-444 coordinates heme.

Belongs to the cytochrome P450 family. The cofactor is heme.

Its subcellular location is the membrane. The protein is Cytochrome P450 71B17 (CYP71B17) of Arabidopsis thaliana (Mouse-ear cress).